We begin with the raw amino-acid sequence, 299 residues long: Acetyl-coenzyme A carboxylase carboxyl transferase subunit beta (299 aa).

A CoA carboxyltransferase N-terminal domain is found at 25–294; sequence VWTKCTSCEQ…PFVEPELIQE (270 aa). Zn(2+) contacts are provided by Cys29, Cys32, Cys48, and Cys51. Residues 29–51 form a C4-type zinc finger; the sequence is CTSCEQVLYRDELKRHLEVCPKC.

Belongs to the AccD/PCCB family. Acetyl-CoA carboxylase is a heterohexamer composed of biotin carboxyl carrier protein (AccB), biotin carboxylase (AccC) and two subunits each of ACCase subunit alpha (AccA) and ACCase subunit beta (AccD). Requires Zn(2+) as cofactor.

The protein localises to the cytoplasm. The catalysed reaction is N(6)-carboxybiotinyl-L-lysyl-[protein] + acetyl-CoA = N(6)-biotinyl-L-lysyl-[protein] + malonyl-CoA. It functions in the pathway lipid metabolism; malonyl-CoA biosynthesis; malonyl-CoA from acetyl-CoA: step 1/1. Component of the acetyl coenzyme A carboxylase (ACC) complex. Biotin carboxylase (BC) catalyzes the carboxylation of biotin on its carrier protein (BCCP) and then the CO(2) group is transferred by the transcarboxylase to acetyl-CoA to form malonyl-CoA. The polypeptide is Acetyl-coenzyme A carboxylase carboxyl transferase subunit beta (Histophilus somni (strain 129Pt) (Haemophilus somnus)).